Here is a 354-residue protein sequence, read N- to C-terminus: Ornithine transcarbamylase, mitochondrial (354 aa).

Residues 1 to 32 (MLSNLRILLNNAALRKGHTSVVRHFWCGKPVQ) constitute a mitochondrion transit peptide. An N6-acetyllysine; alternate modification is found at Lys-70. Lys-70 is modified (N6-succinyllysine; alternate). Lys-80 carries the post-translational modification N6-succinyllysine. Position 88 is an N6-acetyllysine; alternate (Lys-88). The residue at position 88 (Lys-88) is an N6-succinyllysine; alternate. 90 to 94 (STRTR) is a carbamoyl phosphate binding site. Ser-133 is subject to Phosphoserine. Carbamoyl phosphate is bound at residue Arg-141. Arg-141 is a binding site for L-ornithine. Residue Lys-144 is modified to N6-acetyllysine; alternate. At Lys-144 the chain carries N6-succinyllysine; alternate. Position 168 (His-168) interacts with carbamoyl phosphate. Residue Asn-199 participates in L-ornithine binding. Lys-221, Lys-231, and Lys-238 each carry N6-acetyllysine; alternate. Lys-221, Lys-231, and Lys-238 each carry N6-succinyllysine; alternate. Residue Lys-243 is modified to N6-acetyllysine. 263-267 (DTWIS) is an L-ornithine binding site. Residues Lys-274 and Lys-289 each carry the N6-succinyllysine modification. Lys-292 bears the N6-acetyllysine; alternate mark. An N6-succinyllysine; alternate modification is found at Lys-292. 302–305 (HCLP) serves as a coordination point for L-ornithine. Cys-303 is an active-site residue. Lys-307 is subject to N6-acetyllysine; alternate. Lys-307 carries the post-translational modification N6-succinyllysine; alternate. Position 330 (Arg-330) interacts with carbamoyl phosphate. Arg-330 contacts L-ornithine.

Belongs to the aspartate/ornithine carbamoyltransferase superfamily. OTCase family. In terms of assembly, homotrimer. Post-translationally, acetylation at Lys-88 negatively regulates ornithine carbamoyltransferase activity in response to nutrient signals.

Its subcellular location is the mitochondrion matrix. The catalysed reaction is carbamoyl phosphate + L-ornithine = L-citrulline + phosphate + H(+). Its pathway is nitrogen metabolism; urea cycle; L-citrulline from L-ornithine and carbamoyl phosphate: step 1/1. Its activity is regulated as follows. Negatively regulated by lysine acetylation. In terms of biological role, catalyzes the second step of the urea cycle, the condensation of carbamoyl phosphate with L-ornithine to form L-citrulline. The urea cycle ensures the detoxification of ammonia by converting it to urea for excretion. The polypeptide is Ornithine transcarbamylase, mitochondrial (Mus musculus (Mouse)).